The sequence spans 550 residues: Phosphatidylinositol 4-kinase gamma 2 (550 aa).

Ubiquitin-like domains lie at 34–111 (SVLV…YDPL) and 112–190 (LVTV…VEDT). The disordered stretch occupies residues 228–247 (VDGLNKGSPPVRSAEGTGGT). In terms of domain architecture, PI3K/PI4K catalytic spans 234–532 (GSPPVRSAEG…SVLPASSEAT (299 aa)). Residues 240–246 (SAEGTGG) form a G-loop region. Residues 241-247 (AEGTGGT), Lys263, and 359-362 (QMFM) contribute to the ATP site. The tract at residues 392-400 (ANADRHAGN) is catalytic loop. Positions 415 to 441 (PIDHGYCLPENFEDCTFEWLYWPQAKL) are activation loop. Residue Asp417 coordinates ATP.

The protein belongs to the PI3/PI4-kinase family. Type II PI4K subfamily.

The protein resides in the membrane. It carries out the reaction a 1,2-diacyl-sn-glycero-3-phospho-(1D-myo-inositol) + ATP = a 1,2-diacyl-sn-glycero-3-phospho-(1D-myo-inositol 4-phosphate) + ADP + H(+). Its function is as follows. The phosphorylation of phosphatidylinositol (PI) to PI4P is the first committed step in the generation of phosphatidylinositol 4,5-bisphosphate (PIP2), a precursor of the second messenger inositol 1,4,5-trisphosphate (InsP3). This is Phosphatidylinositol 4-kinase gamma 2 (PI4KG2) from Arabidopsis thaliana (Mouse-ear cress).